The chain runs to 774 residues: Alpha,alpha-trehalose phosphorylase (774 aa).

Position 369–370 (369–370 (WD)) interacts with substrate. Catalysis depends on E498, which acts as the Proton donor. 610–611 (KQ) serves as a coordination point for substrate.

This sequence belongs to the glycosyl hydrolase 65 family. Homodimer.

It carries out the reaction alpha,alpha-trehalose + phosphate = beta-D-glucose 1-phosphate + D-glucose. Its pathway is glycan degradation; trehalose degradation. Inhibited by Cu(2+), Hg(2+), Mg(2+), Mn(2+), Pb(2+) and Zn(2+). Catalyzes the reversible phosphorolytic cleavage of trehalose. Phosphorolysis is specific for trehalose, but D-xylose, D-galactose, L-arabinose, D-fucose, L-fucose, D-glucosamine and 2-deoxy D-glucose can act as substitutes for D-glucose in the synthetic reaction. The protein is Alpha,alpha-trehalose phosphorylase (treP) of Thermoanaerobacter brockii (Thermoanaerobium brockii).